The sequence spans 204 residues: Leucyl/phenylalanyl-tRNA--protein transferase (204 aa).

The protein belongs to the L/F-transferase family.

The protein resides in the cytoplasm. It catalyses the reaction N-terminal L-lysyl-[protein] + L-leucyl-tRNA(Leu) = N-terminal L-leucyl-L-lysyl-[protein] + tRNA(Leu) + H(+). The catalysed reaction is N-terminal L-arginyl-[protein] + L-leucyl-tRNA(Leu) = N-terminal L-leucyl-L-arginyl-[protein] + tRNA(Leu) + H(+). The enzyme catalyses L-phenylalanyl-tRNA(Phe) + an N-terminal L-alpha-aminoacyl-[protein] = an N-terminal L-phenylalanyl-L-alpha-aminoacyl-[protein] + tRNA(Phe). Functions in the N-end rule pathway of protein degradation where it conjugates Leu, Phe and, less efficiently, Met from aminoacyl-tRNAs to the N-termini of proteins containing an N-terminal arginine or lysine. In Brucella abortus (strain 2308), this protein is Leucyl/phenylalanyl-tRNA--protein transferase.